Reading from the N-terminus, the 98-residue chain is Putative defensin-like protein 239 (98 aa).

The signal sequence occupies residues 1 to 23; sequence MRYTTSFIGLCFLIFLLKNLVNG. 4 disulfides stabilise this stretch: Cys29–Cys89, Cys39–Cys69, Cys47–Cys86, and Cys67–Cys88.

It belongs to the DEFL family.

The protein localises to the secreted. In Arabidopsis thaliana (Mouse-ear cress), this protein is Putative defensin-like protein 239 (SCRL17).